Consider the following 180-residue polypeptide: MKMVIVLVVWLALSAASASAMQMPCPCAGLQGLYGAGAGLTTMMGAGGLYPYAEYLRQPQCSPLAAAPYYAGCGQTSAMYQPLRQQCCQQQMRMMDVQSVAQQLQMMMQLERAATASSSLYEPALMQQQQQLLAAQGLNPMAMMMAQNMPAMGGLYQYQYQLPSYRTNPCGVSAAIPPYY.

The first 19 residues, 1 to 19, serve as a signal peptide directing secretion; the sequence is MKMVIVLVVWLALSAASAS.

It is found in the vacuole. It localises to the aleurone grain. In terms of biological role, zeins are major seed storage proteins. The chain is Zein-beta from Zea mays (Maize).